A 199-amino-acid chain; its full sequence is Small ribosomal subunit protein eS1 (199 aa).

Belongs to the eukaryotic ribosomal protein eS1 family.

The protein is Small ribosomal subunit protein eS1 of Pyrococcus horikoshii (strain ATCC 700860 / DSM 12428 / JCM 9974 / NBRC 100139 / OT-3).